The primary structure comprises 225 residues: Orotidine 5'-phosphate decarboxylase (225 aa).

Residues aspartate 9, lysine 31, 58-67, threonine 115, arginine 176, glutamine 184, glycine 204, and arginine 205 each bind substrate; that span reads DLKLHDIPNT. Lysine 60 acts as the Proton donor in catalysis.

This sequence belongs to the OMP decarboxylase family. Type 1 subfamily. As to quaternary structure, homodimer.

The catalysed reaction is orotidine 5'-phosphate + H(+) = UMP + CO2. The protein operates within pyrimidine metabolism; UMP biosynthesis via de novo pathway; UMP from orotate: step 2/2. Functionally, catalyzes the decarboxylation of orotidine 5'-monophosphate (OMP) to uridine 5'-monophosphate (UMP). This is Orotidine 5'-phosphate decarboxylase from Wolbachia sp. subsp. Brugia malayi (strain TRS).